The chain runs to 426 residues: Serine--tRNA ligase (426 aa).

231 to 233 (TSE) contributes to the L-serine binding site. 262–264 (RSE) is an ATP binding site. Position 285 (glutamate 285) interacts with L-serine. 349-352 (EISS) is a binding site for ATP. Serine 385 is an L-serine binding site.

It belongs to the class-II aminoacyl-tRNA synthetase family. Type-1 seryl-tRNA synthetase subfamily. In terms of assembly, homodimer. The tRNA molecule binds across the dimer.

It is found in the cytoplasm. The catalysed reaction is tRNA(Ser) + L-serine + ATP = L-seryl-tRNA(Ser) + AMP + diphosphate + H(+). It catalyses the reaction tRNA(Sec) + L-serine + ATP = L-seryl-tRNA(Sec) + AMP + diphosphate + H(+). Its pathway is aminoacyl-tRNA biosynthesis; selenocysteinyl-tRNA(Sec) biosynthesis; L-seryl-tRNA(Sec) from L-serine and tRNA(Sec): step 1/1. In terms of biological role, catalyzes the attachment of serine to tRNA(Ser). Is also able to aminoacylate tRNA(Sec) with serine, to form the misacylated tRNA L-seryl-tRNA(Sec), which will be further converted into selenocysteinyl-tRNA(Sec). The sequence is that of Serine--tRNA ligase from Legionella pneumophila (strain Paris).